A 238-amino-acid polypeptide reads, in one-letter code: Ribonuclease PH (238 aa).

Phosphate-binding positions include Arg-86 and 124 to 126 (GTR).

This sequence belongs to the RNase PH family. Homohexameric ring arranged as a trimer of dimers.

It catalyses the reaction tRNA(n+1) + phosphate = tRNA(n) + a ribonucleoside 5'-diphosphate. Its function is as follows. Phosphorolytic 3'-5' exoribonuclease that plays an important role in tRNA 3'-end maturation. Removes nucleotide residues following the 3'-CCA terminus of tRNAs; can also add nucleotides to the ends of RNA molecules by using nucleoside diphosphates as substrates, but this may not be physiologically important. Probably plays a role in initiation of 16S rRNA degradation (leading to ribosome degradation) during starvation. This chain is Ribonuclease PH, found in Salmonella gallinarum (strain 287/91 / NCTC 13346).